The chain runs to 482 residues: Spore germination protein A1 (482 aa).

The next 6 membrane-spanning stretches (helical) occupy residues 242–262, 284–304, 321–341, 351–371, 373–393, and 406–426; these read VAIL…LGIL, FASI…VSFH, ENVP…IELL, PLGQ…AVEA, LVSS…FTVP, and FISM…FMLV.

It belongs to the GerABKA family.

The protein resides in the cell membrane. Its function is as follows. Forms a complex at the inner spore membrane which acts as a receptor for L-alanine, thus is involved in the stimulation of germination in response to alanine. Can stimulate germination in the absence of GerD and GerK gene products (fructose and glucose receptors, respectively), but the response is improved in their presence. The sequence is that of Spore germination protein A1 (gerAA) from Bacillus subtilis (strain 168).